The following is a 344-amino-acid chain: Cyclin-G2 (344 aa).

The segment at 298–324 (CFDGSESEDSGEDMSCGEESLSSSPPS) is disordered. The span at 302 to 313 (SESEDSGEDMSC) shows a compositional bias: acidic residues.

Belongs to the cyclin family. Cyclin G subfamily. As to expression, highest levels in intestine. Intermediate levels in spleen, brain and kidney. Low levels in testis, stomach, pancreas, liver, salivary gland and muscle. According to PubMed:9139721 also abundant in thymus.

It localises to the cytoplasm. It is found in the nucleus. Functionally, may play a role in growth regulation and in negative regulation of cell cycle progression. The sequence is that of Cyclin-G2 (Ccng2) from Mus musculus (Mouse).